Here is a 600-residue protein sequence, read N- to C-terminus: Oligopeptide-binding protein OppA (600 aa).

The N-terminal stretch at 1-22 (MNKLKVTLLASSVVLAATLLSA) is a signal peptide. The N-palmitoyl cysteine moiety is linked to residue Cys23. The S-diacylglycerol cysteine moiety is linked to residue Cys23.

The protein belongs to the bacterial solute-binding protein 5 family. In terms of assembly, the complex is composed of two ATP-binding proteins (OppD and OppF), two transmembrane proteins (OppB and OppC) and a solute-binding protein (OppA).

Its subcellular location is the cell membrane. Functionally, part of the ABC transporter complex OppABCDF involved in the uptake of oligopeptides. Essential for uptake of peptides larger than three amino acids and for growth in milk. The chain is Oligopeptide-binding protein OppA from Lactococcus lactis subsp. lactis (Streptococcus lactis).